A 203-amino-acid chain; its full sequence is ATP-dependent dethiobiotin synthetase BioD (203 aa).

11 to 16 is a binding site for ATP; the sequence is NVGKTI. Thr15 contributes to the Mg(2+) binding site. Lys31 is an active-site residue. Residue Thr35 coordinates substrate. Residues Asp42 and 94–97 each bind ATP; that span reads EGAG. Asp42 and Glu94 together coordinate Mg(2+).

The protein belongs to the dethiobiotin synthetase family. Homodimer. It depends on Mg(2+) as a cofactor.

The protein localises to the cytoplasm. The catalysed reaction is (7R,8S)-7,8-diammoniononanoate + CO2 + ATP = (4R,5S)-dethiobiotin + ADP + phosphate + 3 H(+). The protein operates within cofactor biosynthesis; biotin biosynthesis; biotin from 7,8-diaminononanoate: step 1/2. Functionally, catalyzes a mechanistically unusual reaction, the ATP-dependent insertion of CO2 between the N7 and N8 nitrogen atoms of 7,8-diaminopelargonic acid (DAPA, also called 7,8-diammoniononanoate) to form a ureido ring. The chain is ATP-dependent dethiobiotin synthetase BioD from Lawsonia intracellularis (strain PHE/MN1-00).